A 122-amino-acid polypeptide reads, in one-letter code: Ig heavy chain V region M603 (122 aa).

The region spanning 1–121 (EVKLVESGGG…WGAGTTVTVS (121 aa)) is the Ig-like domain.

The chain is Ig heavy chain V region M603 from Mus musculus (Mouse).